We begin with the raw amino-acid sequence, 395 residues long: Cation channel sperm-associated protein 3 (395 aa).

Residues 1–48 lie on the Cytoplasmic side of the membrane; it reads MSQHFHHNPVRVKSGSLFATASEALQARLSKIKRKDKECQAYFRKVIK. The helical transmembrane segment at 49-71 threads the bilayer; the sequence is STFFQIVMITTVTTNSFLLVLGT. The Extracellular portion of the chain corresponds to 72–80; the sequence is NYDIQFEFF. The helical transmembrane segment at 81-107 threads the bilayer; that stretch reads RTFEVSELFFVSVYVCEFLMKVYVDPI. A topological domain (cytoplasmic) is located at residue Thr108. A helical membrane pass occupies residues 109-131; sequence YWKDGYNILDVIILIILTIPYLL. Residues 132–143 lie on the Extracellular side of the membrane; that stretch reads RKIKGNHSAYLH. The chain crosses the membrane as a helical span at residues 144–160; the sequence is FADGIQSLRILKLISYS. Residues 161–168 are Cytoplasmic-facing; that stretch reads RGIRTLII. A helical membrane pass occupies residues 169-195; sequence AVGETVYTVASVLTLLFLLMFVFAILG. The Extracellular segment spans residues 196-216; that stretch reads FCLFGVTDRGDLENWGNLASA. An intramembrane region (helical; Pore-forming) is located at residues 217–236; sequence FFTLFSLATVDGWTDLQEEL. At 237-242 the chain is on the extracellular side; that stretch reads DKRKFT. The chain crosses the membrane as a helical span at residues 243–268; sequence VSRAFTILFILLASFIFLNMFVGVMI. The Cytoplasmic segment spans residues 269-395; that stretch reads MHTEDSMKKF…ESSSSLSGLS (127 aa).

The protein belongs to the cation channel sperm-associated (TC 1.A.1.19) family. As to quaternary structure, component of the CatSper complex or CatSpermasome composed of the core pore-forming members CATSPER1, CATSPER2, CATSPER3 and CATSPER4 as well as auxiliary members CATSPERB, CATSPERG2, CATSPERD, CATSPERE, CATSPERZ, C2CD6/CATSPERT, SLCO6C1, TMEM249, TMEM262 and EFCAB9. HSPA1 may be an additional auxiliary complex member. The core complex members CATSPER1, CATSPER2, CATSPER3 and CATSPER4 form a heterotetrameric channel. The auxiliary CATSPERB, CATSPERG2, CATSPERD and CATSPERE subunits form a pavilion-like structure over the pore which stabilizes the complex through interactions with CATSPER4, CATSPER3, CATSPER1 and CATSPER2 respectively. SLCO6C1 interacts with CATSPERE and TMEM262/CATSPERH interacts with CATSPERB, further stabilizing the complex. C2CD6/CATSPERT interacts at least with CATSPERD and is required for targeting the CatSper complex in the flagellar membrane. In terms of tissue distribution, testis-specific.

Its subcellular location is the cell projection. The protein localises to the cilium. The protein resides in the flagellum membrane. The catalysed reaction is Ca(2+)(in) = Ca(2+)(out). Its activity is regulated as follows. In contrast to the human ortholog, not activated by progesterone. Activated by intracellular alkalinization. In terms of biological role, pore-forming subunit of the CatSper complex, a sperm-specific voltage-gated calcium channel that plays a central role in sperm cell hyperactivation. Controls calcium entry to mediate the hyperactivated motility, a step needed for sperm motility which is essential late in the preparation of sperm for fertilization. The chain is Cation channel sperm-associated protein 3 (Catsper3) from Mus musculus (Mouse).